The following is a 659-amino-acid chain: Acetyl-coenzyme A synthetase (659 aa).

Residues 1 to 35 (MATEQTKGQSSESISSVLSERRKFPPPEAFSSQSH) form a disordered region. Residues 205-208 (RRGS), Thr323, and Asn347 each bind CoA. ATP contacts are provided by residues 399–401 (GEP), 423–428 (DTWWQT), Asp512, and Arg527. CoA is bound at residue Ser535. Arg538 contacts ATP. Mg(2+) contacts are provided by Val549, His551, and Val554. Lys621 bears the N6-acetyllysine mark.

This sequence belongs to the ATP-dependent AMP-binding enzyme family. It depends on Mg(2+) as a cofactor. Post-translationally, acetylated. Deacetylation by the SIR2-homolog deacetylase activates the enzyme.

The catalysed reaction is acetate + ATP + CoA = acetyl-CoA + AMP + diphosphate. Catalyzes the conversion of acetate into acetyl-CoA (AcCoA), an essential intermediate at the junction of anabolic and catabolic pathways. AcsA undergoes a two-step reaction. In the first half reaction, AcsA combines acetate with ATP to form acetyl-adenylate (AcAMP) intermediate. In the second half reaction, it can then transfer the acetyl group from AcAMP to the sulfhydryl group of CoA, forming the product AcCoA. In Chlorobaculum tepidum (strain ATCC 49652 / DSM 12025 / NBRC 103806 / TLS) (Chlorobium tepidum), this protein is Acetyl-coenzyme A synthetase.